Consider the following 563-residue polypeptide: Arginine--tRNA ligase (563 aa).

The 'HIGH' region signature appears at 121–131 (PNIAKPFSIGH).

Belongs to the class-I aminoacyl-tRNA synthetase family. In terms of assembly, monomer.

The protein resides in the cytoplasm. The enzyme catalyses tRNA(Arg) + L-arginine + ATP = L-arginyl-tRNA(Arg) + AMP + diphosphate. This is Arginine--tRNA ligase from Streptococcus agalactiae serotype Ia (strain ATCC 27591 / A909 / CDC SS700).